The primary structure comprises 364 residues: Aminomethyltransferase (364 aa).

The protein belongs to the GcvT family. The glycine cleavage system is composed of four proteins: P, T, L and H.

The catalysed reaction is N(6)-[(R)-S(8)-aminomethyldihydrolipoyl]-L-lysyl-[protein] + (6S)-5,6,7,8-tetrahydrofolate = N(6)-[(R)-dihydrolipoyl]-L-lysyl-[protein] + (6R)-5,10-methylene-5,6,7,8-tetrahydrofolate + NH4(+). The glycine cleavage system catalyzes the degradation of glycine. The protein is Aminomethyltransferase of Shigella boydii serotype 18 (strain CDC 3083-94 / BS512).